The sequence spans 431 residues: tRNA(Ile)-lysidine synthase (431 aa).

Position 19–24 (19–24) interacts with ATP; it reads STGIDS.

The protein belongs to the tRNA(Ile)-lysidine synthase family.

The protein resides in the cytoplasm. It catalyses the reaction cytidine(34) in tRNA(Ile2) + L-lysine + ATP = lysidine(34) in tRNA(Ile2) + AMP + diphosphate + H(+). Ligates lysine onto the cytidine present at position 34 of the AUA codon-specific tRNA(Ile) that contains the anticodon CAU, in an ATP-dependent manner. Cytidine is converted to lysidine, thus changing the amino acid specificity of the tRNA from methionine to isoleucine. This Staphylococcus aureus (strain COL) protein is tRNA(Ile)-lysidine synthase.